A 454-amino-acid chain; its full sequence is Bifunctional protein GlmU (454 aa).

A pyrophosphorylase region spans residues 1–228; that stretch reads MSLKVIILAA…EMEVLGVNNK (228 aa). UDP-N-acetyl-alpha-D-glucosamine-binding positions include 8-11, Lys-22, Gln-73, 78-79, 100-102, Gly-138, Glu-153, Asn-168, and Asn-226; these read LAAG, GT, and YGD. Asp-102 contacts Mg(2+). Asn-226 is a Mg(2+) binding site. The segment at 229-249 is linker; it reads SQLQSLERQYQAQLAEELMEQ. Residues 250–454 are N-acetyltransferase; sequence GVTVLDASRI…IKGWQKPTKN (205 aa). Residues Arg-332 and Lys-350 each contribute to the UDP-N-acetyl-alpha-D-glucosamine site. His-362 acts as the Proton acceptor in catalysis. Tyr-365 and Asn-376 together coordinate UDP-N-acetyl-alpha-D-glucosamine. Acetyl-CoA-binding positions include Ala-379, 385–386, Ser-404, Ala-422, and Arg-439; that span reads NY.

In the N-terminal section; belongs to the N-acetylglucosamine-1-phosphate uridyltransferase family. It in the C-terminal section; belongs to the transferase hexapeptide repeat family. Homotrimer. The cofactor is Mg(2+).

The protein resides in the cytoplasm. The catalysed reaction is alpha-D-glucosamine 1-phosphate + acetyl-CoA = N-acetyl-alpha-D-glucosamine 1-phosphate + CoA + H(+). It catalyses the reaction N-acetyl-alpha-D-glucosamine 1-phosphate + UTP + H(+) = UDP-N-acetyl-alpha-D-glucosamine + diphosphate. It functions in the pathway nucleotide-sugar biosynthesis; UDP-N-acetyl-alpha-D-glucosamine biosynthesis; N-acetyl-alpha-D-glucosamine 1-phosphate from alpha-D-glucosamine 6-phosphate (route II): step 2/2. The protein operates within nucleotide-sugar biosynthesis; UDP-N-acetyl-alpha-D-glucosamine biosynthesis; UDP-N-acetyl-alpha-D-glucosamine from N-acetyl-alpha-D-glucosamine 1-phosphate: step 1/1. It participates in bacterial outer membrane biogenesis; LPS lipid A biosynthesis. Functionally, catalyzes the last two sequential reactions in the de novo biosynthetic pathway for UDP-N-acetylglucosamine (UDP-GlcNAc). The C-terminal domain catalyzes the transfer of acetyl group from acetyl coenzyme A to glucosamine-1-phosphate (GlcN-1-P) to produce N-acetylglucosamine-1-phosphate (GlcNAc-1-P), which is converted into UDP-GlcNAc by the transfer of uridine 5-monophosphate (from uridine 5-triphosphate), a reaction catalyzed by the N-terminal domain. This chain is Bifunctional protein GlmU, found in Hydrogenovibrio crunogenus (strain DSM 25203 / XCL-2) (Thiomicrospira crunogena).